Consider the following 348-residue polypeptide: Zinc transporter ZIP13 (348 aa).

At 1–45 the chain is on the cytoplasmic side; that stretch reads MMIQTAVAQAKTAPAGPGPWSIKDLVDLQYLDELMSIDNLDVWFC. Residues 46–66 traverse the membrane as a helical segment; the sequence is SLVGSIAIGLSGIFPLLVIPI. Residues 67–83 lie on the Lumenal side of the membrane; the sequence is EAGTALKTEAGCQKLKK. The chain crosses the membrane as a helical span at residues 84-104; the sequence is LLSFAIGGLLGDVFLHLLPEA. Over 105–118 the chain is Cytoplasmic; sequence WAYTSSPGGSHRHY. Residues 119 to 139 form a helical membrane-spanning segment; it reads CTQGLWVIGGLMSFLTLEKMF. Over 140 to 219 the chain is Lumenal; that stretch reads PDEVGDPETK…CIDNFTHGLA (80 aa). The segment at 144–192 is disordered; it reads GDPETKTSFQRTTSSSSDLSSQFSVSPQTNGICSNNNSDSKPKTDISPY. Low complexity predominate over residues 149–169; the sequence is KTSFQRTTSSSSDLSSQFSVS. Positions 170–182 are enriched in polar residues; it reads PQTNGICSNNNSD. A helical transmembrane segment spans residues 220–240; that stretch reads VAGSFLVSRKVGFLTTFAILL. Positions 241-246 match the XEXPHE-motif motif; the sequence is HEIPHE. The Cytoplasmic portion of the chain corresponds to 241 to 262; sequence HEIPHEVGDFAILLRAGFDRWK. The helical transmembrane segment at 263–283 threads the bilayer; the sequence is AARMQLSTALGGVLGACFALC. Residues 284-294 are Lumenal-facing; it reads SQSQHGAENAT. A helical membrane pass occupies residues 295-315; that stretch reads TWILPFTSGGFLYIALVNVVP. The Cytoplasmic segment spans residues 316-326; that stretch reads DLLEETNPRNS. Residues 327-347 form a helical membrane-spanning segment; that stretch reads LLQVLLLFSGIGVMALLSIAM. A topological domain (lumenal) is located at residue Asp348.

The protein belongs to the ZIP transporter (TC 2.A.5) family. In terms of assembly, homodimer.

It is found in the golgi apparatus membrane. The protein localises to the cytoplasmic vesicle membrane. The protein resides in the endoplasmic reticulum membrane. It carries out the reaction Zn(2+)(in) = Zn(2+)(out). Its function is as follows. Functions as a zinc transporter transporting Zn(2+) from the Golgi apparatus to the cytosol and thus influences the zinc level at least in areas of the cytosol. This chain is Zinc transporter ZIP13, found in Danio rerio (Zebrafish).